Reading from the N-terminus, the 707-residue chain is MAREYPLERYRNFGIMAHIDAGKTTTTERILFYTGKNHKMGETHEGASTMDWMEQEAERGITITSAATTTFWQRHEDADFTPDDSERCRFNIIDTPGHVDFTIEVERSLAVLDGAICLLDGNAGVEPQTETVWRQADRYKVPRIVFVNKMDKIGADFFKCVAMIKDRTGGTPCPIALPIGAEDKLEGIVDLIKMEEWVWKGEDLGASWVRQPIRDELQDVAEEWRGKMIELAVEQDDEAMEAYLDGNEPDEATLRKLIRKGTLSLSFFPVMAGSAFKNKGVQPLLNAVVDFLPAPTDVPAYLGFAPGDETETRNIERSASDDQPFSALAFKIMNDPFVGSLTFTRIYSGQLKKGDQMLNATKGKRERVGRMMVMHAINREEIEEAFAGEIIALAGLKETTTGDTLCDPAKPVVLETMTFPEPVIEIAVEPKSKADQEKMGLALQRLAAEDPSFRVETDMESGQTIMKGMGELHLDILVDRMKREFKVEANIGAPQVAYRETISQPAEIDYTHKKQTGGTGQFARVKLQIEPTEPGEGYSFESKIVGGAVPKEYIPGVEKGIKSVMDSGPLAGFPVIDFKVALIDGAFHDVDSSVLAFEIAARAGMREGLKKAGAKLLEPIMRVEVVTPEEYTGSIIGDLTSRRGMVRGQDTRGNANVIDAFVPLANMFGYINNLRSMSSGRAVFTMQFDHYEAVPQNISDEIQKKYA.

The region spanning 8–296 is the tr-type G domain; the sequence is ERYRNFGIMA…AVVDFLPAPT (289 aa). GTP contacts are provided by residues 17 to 24, 94 to 98, and 148 to 151; these read AHIDAGKT, DTPGH, and NKMD.

Belongs to the TRAFAC class translation factor GTPase superfamily. Classic translation factor GTPase family. EF-G/EF-2 subfamily.

It localises to the cytoplasm. In terms of biological role, catalyzes the GTP-dependent ribosomal translocation step during translation elongation. During this step, the ribosome changes from the pre-translocational (PRE) to the post-translocational (POST) state as the newly formed A-site-bound peptidyl-tRNA and P-site-bound deacylated tRNA move to the P and E sites, respectively. Catalyzes the coordinated movement of the two tRNA molecules, the mRNA and conformational changes in the ribosome. The sequence is that of Elongation factor G from Paracoccus denitrificans (strain Pd 1222).